A 141-amino-acid chain; its full sequence is NADH dehydrogenase [ubiquinone] 1 alpha subcomplex subunit 11 (141 aa).

Alanine 2 bears the N-acetylalanine mark. Transmembrane regions (helical) follow at residues lysine 21–histidine 43 and arginine 58–valine 80.

Belongs to the complex I NDUFA11 subunit family. In terms of assembly, complex I is composed of 45 different subunits.

The protein localises to the mitochondrion inner membrane. Functionally, accessory subunit of the mitochondrial membrane respiratory chain NADH dehydrogenase (Complex I), that is believed not to be involved in catalysis. Complex I functions in the transfer of electrons from NADH to the respiratory chain. The immediate electron acceptor for the enzyme is believed to be ubiquinone. In Rattus norvegicus (Rat), this protein is NADH dehydrogenase [ubiquinone] 1 alpha subcomplex subunit 11 (Ndufa11).